The following is a 388-amino-acid chain: L-lactate dehydrogenase (388 aa).

An FMN hydroxy acid dehydrogenase domain is found at 1 to 380 (MIISAASDYR…SADALSRVTR (380 aa)). Position 24 (Y24) interacts with substrate. S106 and Q127 together coordinate FMN. A substrate-binding site is contributed by Y129. T155 provides a ligand contact to FMN. R164 contacts substrate. K251 lines the FMN pocket. Catalysis depends on H275, which acts as the Proton acceptor. Residue R278 coordinates substrate. 306–330 (DSGIRSGLDVVRMLALGADAVLLGR) serves as a coordination point for FMN.

The protein belongs to the FMN-dependent alpha-hydroxy acid dehydrogenase family. FMN is required as a cofactor.

It is found in the cell inner membrane. The enzyme catalyses (S)-lactate + A = pyruvate + AH2. Its function is as follows. Catalyzes the conversion of L-lactate to pyruvate. Is coupled to the respiratory chain. The sequence is that of L-lactate dehydrogenase from Xanthomonas euvesicatoria pv. vesicatoria (strain 85-10) (Xanthomonas campestris pv. vesicatoria).